A 458-amino-acid chain; its full sequence is Pentatricopeptide repeat-containing protein At1g77405 (458 aa).

PPR repeat units lie at residues 164–198 (TTAS…HCKP), 199–233 (DVYA…GFRY), 236–271 (DTYT…NRMF), 282–316 (DVVT…GCVP), 317–351 (NQVT…GHGV), 353–387 (GSST…GLVP), and 388–419 (REYT…MREG).

Belongs to the PPR family. P subfamily.

The polypeptide is Pentatricopeptide repeat-containing protein At1g77405 (Arabidopsis thaliana (Mouse-ear cress)).